The primary structure comprises 285 residues: Bifunctional protein FolD (285 aa).

NADP(+) is bound by residues 166-168 (GRS), Ser191, and Ile232.

Belongs to the tetrahydrofolate dehydrogenase/cyclohydrolase family. As to quaternary structure, homodimer.

It catalyses the reaction (6R)-5,10-methylene-5,6,7,8-tetrahydrofolate + NADP(+) = (6R)-5,10-methenyltetrahydrofolate + NADPH. The catalysed reaction is (6R)-5,10-methenyltetrahydrofolate + H2O = (6R)-10-formyltetrahydrofolate + H(+). It functions in the pathway one-carbon metabolism; tetrahydrofolate interconversion. Catalyzes the oxidation of 5,10-methylenetetrahydrofolate to 5,10-methenyltetrahydrofolate and then the hydrolysis of 5,10-methenyltetrahydrofolate to 10-formyltetrahydrofolate. The protein is Bifunctional protein FolD of Rickettsia typhi (strain ATCC VR-144 / Wilmington).